Consider the following 134-residue polypeptide: Protein Turandot E (134 aa).

The first 38 residues, methionine 1–glycine 38, serve as a signal peptide directing secretion.

This sequence belongs to the Turandot family.

It localises to the secreted. In terms of biological role, a humoral factor that may play a role in stress tolerance. The protein is Protein Turandot E of Drosophila yakuba (Fruit fly).